The sequence spans 62 residues: Conotoxin Cal12.2e (62 aa).

Residues 1–19 (MKLTCVLVVLLLVLPFGDL) form the signal peptide.

This sequence belongs to the conotoxin O1 superfamily. Contains 4 disulfide bonds. In terms of tissue distribution, expressed by the venom duct.

It is found in the secreted. Functionally, probable neurotoxin. The sequence is that of Conotoxin Cal12.2e from Californiconus californicus (California cone).